Consider the following 208-residue polypeptide: Probable GTP-binding protein EngB (208 aa).

The region spanning 18 to 187 (KQFEICVIGR…FALMKKVVIQ (170 aa)) is the EngB-type G domain. Residues 26 to 33 (GRSNVGKS), 52 to 56 (GRTQL), 69 to 72 (DLPG), 135 to 138 (NKLD), and 166 to 168 (VSA) contribute to the GTP site. Mg(2+)-binding residues include Ser33 and Thr54.

This sequence belongs to the TRAFAC class TrmE-Era-EngA-EngB-Septin-like GTPase superfamily. EngB GTPase family. Requires Mg(2+) as cofactor.

Its function is as follows. Necessary for normal cell division and for the maintenance of normal septation. The sequence is that of Probable GTP-binding protein EngB from Ureaplasma parvum serovar 3 (strain ATCC 27815 / 27 / NCTC 11736).